The sequence spans 94 residues: Large ribosomal subunit protein bL28 (94 aa).

This sequence belongs to the bacterial ribosomal protein bL28 family.

This chain is Large ribosomal subunit protein bL28, found in Hyphomonas neptunium (strain ATCC 15444).